The sequence spans 260 residues: Uroplakin-1b (260 aa).

At 2–15 the chain is on the cytoplasmic side; sequence AKDDSTVRCFQGLL. The chain crosses the membrane as a helical span at residues 16–36; it reads IFGNVIIGMCSIALMAECIFF. Topologically, residues 37–60 are extracellular; sequence VSDQNSLYPLLEATNNDDIYAAAW. The chain crosses the membrane as a helical span at residues 61-81; it reads IGMFVGICLFCLSVLGIVGIM. Residues 82-86 lie on the Cytoplasmic side of the membrane; the sequence is KSNRK. A helical transmembrane segment spans residues 87–107; that stretch reads ILLVYFILMFIVYAFEVASCI. Residues 108-229 lie on the Extracellular side of the membrane; it reads TAATQRDFFT…ELISGPMNRH (122 aa). A helical transmembrane segment spans residues 230 to 250; the sequence is AWGVAWFGFAILCWTFWVLLG. The Cytoplasmic segment spans residues 251 to 260; it reads TMFYWSRIDY.

Belongs to the tetraspanin (TM4SF) family. Heterodimer with uroplakin-3A (UPK3A) or uroplakin-3B (UPK3B). In terms of processing, N-glycosylated with high-mannose oligosaccharides. In terms of tissue distribution, bladder epithelium.

It localises to the membrane. In terms of biological role, component of the asymmetric unit membrane (AUM); a highly specialized biomembrane elaborated by terminally differentiated urothelial cells. May play an important role in normal bladder epithelial physiology, possibly in regulating membrane permeability of superficial umbrella cells or in stabilizing the apical membrane through AUM/cytoskeletal interactions. The sequence is that of Uroplakin-1b (UPK1B) from Bos taurus (Bovine).